A 629-amino-acid chain; its full sequence is DNA-directed RNA polymerase subunit beta' (629 aa).

Zn(2+)-binding residues include Cys-70, Cys-72, Cys-85, and Cys-88. Positions 472, 474, and 476 each coordinate Mg(2+).

It belongs to the RNA polymerase beta' chain family. RpoC1 subfamily. In terms of assembly, in plastids the minimal PEP RNA polymerase catalytic core is composed of four subunits: alpha, beta, beta', and beta''. When a (nuclear-encoded) sigma factor is associated with the core the holoenzyme is formed, which can initiate transcription. It depends on Mg(2+) as a cofactor. Zn(2+) is required as a cofactor.

It localises to the plastid. It is found in the chloroplast. The catalysed reaction is RNA(n) + a ribonucleoside 5'-triphosphate = RNA(n+1) + diphosphate. Functionally, DNA-dependent RNA polymerase catalyzes the transcription of DNA into RNA using the four ribonucleoside triphosphates as substrates. The polypeptide is DNA-directed RNA polymerase subunit beta' (Porphyra purpurea (Red seaweed)).